The chain runs to 41 residues: Cytochrome b559 subunit beta (41 aa).

The chain crosses the membrane as a helical span at residues 16 to 32; that stretch reads WLAVHALAVPTVFFLGA. His-20 contacts heme.

It belongs to the PsbE/PsbF family. In terms of assembly, heterodimer of an alpha subunit and a beta subunit. PSII is composed of 1 copy each of membrane proteins PsbA, PsbB, PsbC, PsbD, PsbE, PsbF, PsbH, PsbI, PsbJ, PsbK, PsbL, PsbM, PsbT, PsbX, PsbY, PsbZ, Psb30/Ycf12, at least 3 peripheral proteins of the oxygen-evolving complex and a large number of cofactors. It forms dimeric complexes. Heme b serves as cofactor.

The protein resides in the plastid. It is found in the chloroplast thylakoid membrane. Functionally, this b-type cytochrome is tightly associated with the reaction center of photosystem II (PSII). PSII is a light-driven water:plastoquinone oxidoreductase that uses light energy to abstract electrons from H(2)O, generating O(2) and a proton gradient subsequently used for ATP formation. It consists of a core antenna complex that captures photons, and an electron transfer chain that converts photonic excitation into a charge separation. This is Cytochrome b559 subunit beta from Chlorella vulgaris (Green alga).